A 507-amino-acid polypeptide reads, in one-letter code: Probable lipid II flippase MurJ (507 aa).

A run of 13 helical transmembrane segments spans residues 3-23, 54-74, 92-112, 132-152, 156-176, 185-205, 268-288, 310-330, 351-371, 379-399, 405-425, 438-458, and 472-492; these read LFRS…FGLV, IFAE…KMLI, LTLI…ILCI, ITIP…ILNS, FAAF…FTLI, ISIS…MFIC, IYQF…LPEM, IGLL…HPIT, ISAF…TPIF, TPLK…LLLM, IGIA…LYSY, IKLF…IIAL, and LLIK…IFFG.

This sequence belongs to the MurJ/MviN family.

Its subcellular location is the cell inner membrane. The protein operates within cell wall biogenesis; peptidoglycan biosynthesis. Functionally, involved in peptidoglycan biosynthesis. Transports lipid-linked peptidoglycan precursors from the inner to the outer leaflet of the cytoplasmic membrane. The polypeptide is Probable lipid II flippase MurJ (Rickettsia prowazekii (strain Madrid E)).